Consider the following 275-residue polypeptide: tRNA uridine(34) hydroxylase (275 aa).

A Rhodanese domain is found at 122–218 (SRSDVYTIDT…YFKSTQNKNS (97 aa)). The active-site Cysteine persulfide intermediate is the Cys-178.

The protein belongs to the TrhO family.

The catalysed reaction is uridine(34) in tRNA + AH2 + O2 = 5-hydroxyuridine(34) in tRNA + A + H2O. Its function is as follows. Catalyzes oxygen-dependent 5-hydroxyuridine (ho5U) modification at position 34 in tRNAs. In Ehrlichia chaffeensis (strain ATCC CRL-10679 / Arkansas), this protein is tRNA uridine(34) hydroxylase.